Consider the following 365-residue polypeptide: Peptide chain release factor 2 (365 aa).

Position 252 is an N5-methylglutamine (Q252).

Belongs to the prokaryotic/mitochondrial release factor family. Methylated by PrmC. Methylation increases the termination efficiency of RF2.

It localises to the cytoplasm. Functionally, peptide chain release factor 2 directs the termination of translation in response to the peptide chain termination codons UGA and UAA. The protein is Peptide chain release factor 2 of Colwellia psychrerythraea (strain 34H / ATCC BAA-681) (Vibrio psychroerythus).